A 371-amino-acid chain; its full sequence is Phosphate acyltransferase (371 aa).

The protein belongs to the PlsX family. In terms of assembly, homodimer. Probably interacts with PlsY.

It localises to the cytoplasm. It catalyses the reaction a fatty acyl-[ACP] + phosphate = an acyl phosphate + holo-[ACP]. It functions in the pathway lipid metabolism; phospholipid metabolism. Functionally, catalyzes the reversible formation of acyl-phosphate (acyl-PO(4)) from acyl-[acyl-carrier-protein] (acyl-ACP). This enzyme utilizes acyl-ACP as fatty acyl donor, but not acyl-CoA. The sequence is that of Phosphate acyltransferase from Ruegeria pomeroyi (strain ATCC 700808 / DSM 15171 / DSS-3) (Silicibacter pomeroyi).